The following is a 746-amino-acid chain: Serine/threonine-protein kinase SMU1 (746 aa).

2 disordered regions span residues 1–138 (MSLV…DTLH) and 155–212 (QRSH…GSRN). Low complexity-rich tracts occupy residues 15 to 54 (SSAN…SSTT) and 85 to 105 (SVSS…PSSA). Polar residues-rich tracts occupy residues 106–121 (LPWS…STAT), 128–138 (RSNTAGPDTLH), and 156–176 (RSHS…SSPT). Residues 194-203 (PSRDRERSRD) show a composition bias toward basic and acidic residues. Positions 237 to 250 (ISTPYDPVHLTHVG) constitute a CRIB domain. Residues 301–451 (GGSDVWKKMG…RRETKKSTIK (151 aa)) are disordered. Over residues 370–380 (PPSNASTSSAD) the composition is skewed to polar residues. The span at 414-430 (SPASRAPDAPAAVSAAS) shows a compositional bias: low complexity. The region spanning 472 to 723 (YRSLQKIGQG…ALGMLAHPFL (252 aa)) is the Protein kinase domain. ATP-binding positions include 478-486 (IGQGASGGV) and lysine 501. The active-site Proton acceptor is the aspartate 591.

The protein belongs to the protein kinase superfamily. STE Ser/Thr protein kinase family. STE20 subfamily.

The protein localises to the cytoplasm. It is found in the nucleus. It carries out the reaction L-seryl-[protein] + ATP = O-phospho-L-seryl-[protein] + ADP + H(+). The enzyme catalyses L-threonyl-[protein] + ATP = O-phospho-L-threonyl-[protein] + ADP + H(+). Its function is as follows. MAP4K component of the MAPK pathway required for the mating pheromone response and the regulation of cell polarity and cell cycle. Phosphorylates histone H2B to form H2BS10ph. This chain is Serine/threonine-protein kinase SMU1 (SMU1), found in Mycosarcoma maydis (Corn smut fungus).